Reading from the N-terminus, the 88-residue chain is Small ribosomal subunit protein uS17 (88 aa).

This sequence belongs to the universal ribosomal protein uS17 family. Part of the 30S ribosomal subunit.

Functionally, one of the primary rRNA binding proteins, it binds specifically to the 5'-end of 16S ribosomal RNA. This Helicobacter hepaticus (strain ATCC 51449 / 3B1) protein is Small ribosomal subunit protein uS17.